Reading from the N-terminus, the 263-residue chain is 4-hydroxy-2-oxo-heptane-1,7-dioate aldolase (263 aa).

H45 (proton acceptor) is an active-site residue. Q147 lines the substrate pocket. An a divalent metal cation-binding site is contributed by E149. Substrate-binding residues include A174 and D175. Residue D175 participates in a divalent metal cation binding.

It belongs to the HpcH/HpaI aldolase family. As to quaternary structure, homohexamer; trimer of dimers. The cofactor is a divalent metal cation.

The catalysed reaction is 4-hydroxy-2-oxoheptanedioate = succinate semialdehyde + pyruvate. Its pathway is aromatic compound metabolism; 4-hydroxyphenylacetate degradation; pyruvate and succinate semialdehyde from 4-hydroxyphenylacetate: step 7/7. Its function is as follows. Catalyzes the reversible retro-aldol cleavage of 4-hydroxy-2-ketoheptane-1,7-dioate (HKHD) to pyruvate and succinic semialdehyde. In Salmonella choleraesuis (strain SC-B67), this protein is 4-hydroxy-2-oxo-heptane-1,7-dioate aldolase.